Reading from the N-terminus, the 190-residue chain is Anthranilate synthase component 2 (190 aa).

Residues 1–190 (MILLIDNYDS…ILQNFINCLN (190 aa)) enclose the Glutamine amidotransferase type-1 domain. 52–54 (CPG) is an L-glutamine binding site. Cys-79 serves as the catalytic Nucleophile; for GATase activity. L-glutamine is bound by residues Gln-83 and 129–130 (SL). Active-site residues include His-169 and Glu-171.

As to quaternary structure, tetramer of two components I and two components II.

It is found in the plastid. It localises to the cyanelle. The catalysed reaction is chorismate + L-glutamine = anthranilate + pyruvate + L-glutamate + H(+). Its pathway is amino-acid biosynthesis; L-tryptophan biosynthesis; L-tryptophan from chorismate: step 1/5. The sequence is that of Anthranilate synthase component 2 (trpG) from Cyanophora paradoxa.